A 138-amino-acid chain; its full sequence is ATP synthase epsilon chain (138 aa).

Belongs to the ATPase epsilon chain family. As to quaternary structure, F-type ATPases have 2 components, CF(1) - the catalytic core - and CF(0) - the membrane proton channel. CF(1) has five subunits: alpha(3), beta(3), gamma(1), delta(1), epsilon(1). CF(0) has three main subunits: a, b and c.

Its subcellular location is the cell membrane. Functionally, produces ATP from ADP in the presence of a proton gradient across the membrane. This is ATP synthase epsilon chain (atpC) from Buchnera aphidicola subsp. Schizaphis graminum (strain Sg).